Consider the following 209-residue polypeptide: uncharacterized protein (209 aa).

A coiled-coil region spans residues 41–76 (NVENLCLIRNKLKTDIENLLENKIDVENKLLVLRNQ).

This is an uncharacterized protein from Acanthamoeba polyphaga (Amoeba).